Here is a 272-residue protein sequence, read N- to C-terminus: Aurora kinase (272 aa).

Residues 10 to 263 (FEIGRLLGRG…LTEALNHPFI (254 aa)) enclose the Protein kinase domain. Residues 16 to 24 (LGRGKFGQV) and K39 each bind ATP. D134 acts as the Proton acceptor in catalysis.

This sequence belongs to the protein kinase superfamily. Ser/Thr protein kinase family. Aurora subfamily.

The protein localises to the nucleus. It is found in the cytoplasm. It localises to the cytoskeleton. Its subcellular location is the spindle. The protein resides in the chromosome. The protein localises to the centromere. It is found in the kinetochore. It catalyses the reaction L-seryl-[protein] + ATP = O-phospho-L-seryl-[protein] + ADP + H(+). The catalysed reaction is L-threonyl-[protein] + ATP = O-phospho-L-threonyl-[protein] + ADP + H(+). Component of the chromosomal passenger complex (CPC), a complex that acts as a key regulator of chromosome segregation and cytokinesis. Has a role in error-correction of aberrent kinetochore-microtubule attachments to ensure that sister kinetochores become bioriented and connect to opposite poles by promoting spindle assembly checkpoint signaling. The chain is Aurora kinase (IPL1) from Encephalitozoon cuniculi (strain GB-M1) (Microsporidian parasite).